Consider the following 263-residue polypeptide: Undecaprenyl-diphosphatase (263 aa).

The next 7 helical transmembrane spans lie at Arg38–Leu58, Arg75–Val95, Pro108–Gly128, Val135–Pro155, Phe181–Met201, Val217–Ile237, and Phe242–Ala262.

It belongs to the UppP family.

It is found in the cell inner membrane. It carries out the reaction di-trans,octa-cis-undecaprenyl diphosphate + H2O = di-trans,octa-cis-undecaprenyl phosphate + phosphate + H(+). Catalyzes the dephosphorylation of undecaprenyl diphosphate (UPP). Confers resistance to bacitracin. The sequence is that of Undecaprenyl-diphosphatase from Xanthomonas campestris pv. campestris (strain 8004).